Consider the following 261-residue polypeptide: Recombination protein bet (261 aa).

Functionally, gene bet protein functions in general recombination and in the late, rolling-circle mode of lambda DNA replication. Has a function similar to that of E.coli recT. It is a single-stranded DNA binding protein that can promote renaturation of DNA. This is Recombination protein bet (bet) from Escherichia coli (Bacteriophage lambda).